Here is a 474-residue protein sequence, read N- to C-terminus: Sugar transporter ERD6-like 17 (474 aa).

The next 12 membrane-spanning stretches (helical) occupy residues 27–47 (ITAC…SFGV), 76–96 (FATL…MVIG), 106–126 (FLCI…LLNF), 129–149 (IISG…IAEI), 159–180 (TFSN…GNFI), 184–204 (TLAL…FFVP), 266–286 (TLVV…AAVI), 302–322 (IGTT…LILV), 329–349 (PLLM…GVAF), 363–383 (ILSF…LGGL), 403–423 (IVTL…NFLF), and 429–449 (GTFF…WLLV).

Belongs to the major facilitator superfamily. Sugar transporter (TC 2.A.1.1) family. As to expression, expressed in young seedlings.

The protein localises to the membrane. Sugar transporter. This chain is Sugar transporter ERD6-like 17, found in Arabidopsis thaliana (Mouse-ear cress).